Here is a 580-residue protein sequence, read N- to C-terminus: Acyl-coenzyme A synthetase ACSM3, mitochondrial (580 aa).

The N-terminal 21 residues, 1–21 (MVMLLRARCFQRLAIPDPMRV), are a transit peptide targeting the mitochondrion. N6-succinyllysine occurs at positions 67 and 100. At Lys-151 the chain carries N6-acetyllysine. ATP contacts are provided by residues 229–237 (TSGTTGPPK), 368–373 (EGYGQT), Asp-455, Arg-470, and Lys-566.

It belongs to the ATP-dependent AMP-binding enzyme family. It depends on Mg(2+) as a cofactor. Mn(2+) is required as a cofactor. Detected in kidney (at protein level). Detected in kidney proximal tubules and in liver. Detected at low levels in testis, stomach, heart and lung.

The protein localises to the mitochondrion. The protein resides in the mitochondrion matrix. The enzyme catalyses a medium-chain fatty acid + ATP + CoA = a medium-chain fatty acyl-CoA + AMP + diphosphate. It catalyses the reaction propanoate + ATP + CoA = propanoyl-CoA + AMP + diphosphate. The catalysed reaction is butanoate + ATP + CoA = butanoyl-CoA + AMP + diphosphate. It carries out the reaction 2-methylpropanoate + ATP + CoA = 2-methylpropanoyl-CoA + AMP + diphosphate. The enzyme catalyses 2-methylbutanoate + ATP + CoA = 2-methylbutanoyl-CoA + AMP + diphosphate. It catalyses the reaction octanoate + ATP + CoA = octanoyl-CoA + AMP + diphosphate. Catalyzes the activation of fatty acids by CoA to produce an acyl-CoA, the first step in fatty acid metabolism. Capable of activating medium-chain fatty acids with a preference for isobutyrate among fatty acids with 2-6 carbon atoms. The protein is Acyl-coenzyme A synthetase ACSM3, mitochondrial (Acsm3) of Mus musculus (Mouse).